The sequence spans 320 residues: Eukaryotic translation initiation factor 3 subunit G (320 aa).

Residues methionine 1–valine 59 form a disordered region. Serine 8 and serine 11 each carry phosphoserine. A phosphothreonine mark is found at threonine 38 and threonine 41. A phosphoserine mark is found at serine 42, serine 189, serine 223, and serine 264. The segment at lysine 209–arginine 234 is disordered. Residues glycine 221–arginine 234 are compositionally biased toward basic and acidic residues. Positions alanine 239–proline 317 constitute an RRM domain.

Component of the eukaryotic translation initiation factor 3 (eIF-3) complex, which is composed of 13 subunits: EIF3A, EIF3B, EIF3C, EIF3D, EIF3E, EIF3F, EIF3G, EIF3H, EIF3I, EIF3J, EIF3K, EIF3L and EIF3M. The eIF-3 complex appears to include 3 stable modules: module A is composed of EIF3A, EIF3B, EIF3G and EIF3I; module B is composed of EIF3F, EIF3H, and EIF3M; and module C is composed of EIF3C, EIF3D, EIF3E, EIF3K and EIF3L. EIF3C of module C binds EIF3B of module A and EIF3H of module B, thereby linking the three modules. EIF3J is a labile subunit that binds to the eIF-3 complex via EIF3B. The eIF-3 complex interacts with RPS6KB1 under conditions of nutrient depletion. Mitogenic stimulation leads to binding and activation of a complex composed of MTOR and RPTOR, leading to phosphorylation and release of RPS6KB1 and binding of EIF4B to eIF-3. Interacts (via C-terminus) with AIFM1 (via N-terminus). Interacts with DHX33; the interaction is independent of RNA. In terms of processing, phosphorylated. Phosphorylation is enhanced upon serum stimulation.

The protein localises to the cytoplasm. Its subcellular location is the nucleus. It localises to the perinuclear region. Functionally, RNA-binding component of the eukaryotic translation initiation factor 3 (eIF-3) complex, which is required for several steps in the initiation of protein synthesis. The eIF-3 complex associates with the 40S ribosome and facilitates the recruitment of eIF-1, eIF-1A, eIF-2:GTP:methionyl-tRNAi and eIF-5 to form the 43S pre-initiation complex (43S PIC). The eIF-3 complex stimulates mRNA recruitment to the 43S PIC and scanning of the mRNA for AUG recognition. The eIF-3 complex is also required for disassembly and recycling of post-termination ribosomal complexes and subsequently prevents premature joining of the 40S and 60S ribosomal subunits prior to initiation. The eIF-3 complex specifically targets and initiates translation of a subset of mRNAs involved in cell proliferation, including cell cycling, differentiation and apoptosis, and uses different modes of RNA stem-loop binding to exert either translational activation or repression. This subunit can bind 18S rRNA. Its function is as follows. (Microbial infection) In case of FCV infection, plays a role in the ribosomal termination-reinitiation event leading to the translation of VP2. The polypeptide is Eukaryotic translation initiation factor 3 subunit G (Homo sapiens (Human)).